Consider the following 486-residue polypeptide: ATP synthase subunit beta (486 aa).

Position 171-178 (171-178 (GGAGVGKT)) interacts with ATP.

It belongs to the ATPase alpha/beta chains family. In terms of assembly, F-type ATPases have 2 components, CF(1) - the catalytic core - and CF(0) - the membrane proton channel. CF(1) has five subunits: alpha(3), beta(3), gamma(1), delta(1), epsilon(1). CF(0) has three main subunits: a(1), b(2) and c(9-12). The alpha and beta chains form an alternating ring which encloses part of the gamma chain. CF(1) is attached to CF(0) by a central stalk formed by the gamma and epsilon chains, while a peripheral stalk is formed by the delta and b chains.

Its subcellular location is the cell membrane. The enzyme catalyses ATP + H2O + 4 H(+)(in) = ADP + phosphate + 5 H(+)(out). In terms of biological role, produces ATP from ADP in the presence of a proton gradient across the membrane. The catalytic sites are hosted primarily by the beta subunits. The protein is ATP synthase subunit beta of Salinispora tropica (strain ATCC BAA-916 / DSM 44818 / JCM 13857 / NBRC 105044 / CNB-440).